The following is a 179-amino-acid chain: UPF0316 protein Ping_1367 (179 aa).

A run of 2 helical transmembrane segments spans residues 28–48 and 55–75; these read FLAS…SAQV and WYLA…GISI.

It belongs to the UPF0316 family.

It is found in the cell membrane. This is UPF0316 protein Ping_1367 from Psychromonas ingrahamii (strain DSM 17664 / CCUG 51855 / 37).